A 370-amino-acid chain; its full sequence is GTPase Obg (370 aa).

Residues 1 to 159 (MKFIDEARIE…RMLRLELKVL (159 aa)) form the Obg domain. An OBG-type G domain is found at 160–334 (ADVGLLGMPN…LCYAIYDYLA (175 aa)). GTP is bound by residues 166-173 (GMPNAGKS), 191-195 (FTTLA), 213-216 (DIPG), 284-287 (NKLD), and 315-317 (SAL). The Mg(2+) site is built by S173 and T193. Residues 344–370 (EEEDLATDVRFRDAPPADGGATPGGDA) form a disordered region.

The protein belongs to the TRAFAC class OBG-HflX-like GTPase superfamily. OBG GTPase family. Monomer. It depends on Mg(2+) as a cofactor.

The protein localises to the cytoplasm. Its function is as follows. An essential GTPase which binds GTP, GDP and possibly (p)ppGpp with moderate affinity, with high nucleotide exchange rates and a fairly low GTP hydrolysis rate. Plays a role in control of the cell cycle, stress response, ribosome biogenesis and in those bacteria that undergo differentiation, in morphogenesis control. This Burkholderia ambifaria (strain MC40-6) protein is GTPase Obg.